We begin with the raw amino-acid sequence, 233 residues long: Probable O-methyltransferase Rv1703c (233 aa).

S-adenosyl-L-methionine-binding positions include valine 55, glutamate 77, 79 to 80, and glutamate 102; that span reads GT. Residue aspartate 157 participates in a divalent metal cation binding. Residue aspartate 159 participates in S-adenosyl-L-methionine binding. 2 residues coordinate a divalent metal cation: aspartate 185 and asparagine 186.

It belongs to the class I-like SAM-binding methyltransferase superfamily. Cation-dependent O-methyltransferase family.

Specifically methylates an O atom of its substrate. The sequence is that of Probable O-methyltransferase Rv1703c from Mycobacterium tuberculosis (strain ATCC 25618 / H37Rv).